We begin with the raw amino-acid sequence, 780 residues long: Cullin-5 (780 aa).

Ser-34 bears the Phosphoserine mark. Thr-210 carries the phosphothreonine modification. Residues 711–772 (RILRTQEAII…HRYIRRDEAD (62 aa)) form the Cullin neddylation domain. Residue Lys-724 forms a Glycyl lysine isopeptide (Lys-Gly) (interchain with G-Cter in NEDD8) linkage.

Belongs to the cullin family. As to quaternary structure, component of multiple cullin-5-RING E3 ubiquitin-protein ligase complexes (ECS complexes, also named CRL5 complexes) formed of CUL5, Elongin BC (ELOB and ELOC), RNF7/RBX2 and a variable SOCS box domain-containing protein as substrate-specific recognition component. CUL5-containing ECS complexes specifically contain RNF7/RBX2, and not RBX1, as catalytic subunit. Component of the ECS(ASB2) complex with the substrate recognition component ASB2. Component of the ECS(ASB6) complex with the substrate recognition component ASB6. Component of the ECS(ASB7) complex with the substrate recognition component ASB7. Component of the ECS(ASB9) complex with the substrate recognition component ASB9. Component of the ECS(ASB11) complex with the substrate recognition component ASB11. Component of the ECS(ASB12) complex with the substrate recognition component ASB12. Component of the ECS(LRRC41) complex with the substrate recognition component LRRC41. Component of the ECS(SOCS1) complex with the substrate recognition component SOCS1. Component of the ECS(SOCS2) complex with the substrate recognition component SOCS2. Component of the ECS(WSB1) complex with the substrate recognition subunit WSB1. Component of the ECS(SOCS3) complex with the substrate recognition component SOCS3. Component of the ECS(SOCS7) complex with the substrate recognition component SOCS7. Component of the ECS(SPSB1) complex with the substrate recognition component SPSB1. Component of the ECS(SPSB3) complex with the substrate recognition component SPSB3. Component of the ECS(SPSB2) complex with the substrate recognition component SPSB2. Component of the ECS(SPSB4) complex with the substrate recognition component SPSB4. Component of the ECS(RAB40) complex with the substrate recognition subunit RAB40A, RAB40B or RAB40C. Component of the ECS(KLHDC1) complex with the substrate recognition component KLHDC1. Component of the ECS(PCMTD1) complex with the substrate recognition subunit PCMTD1. May also form complexes containing RBX1 and ELOA or VHL; additional evidence is however required to confirm this result in vivo. Interacts (when neddylated) with ARIH2; leading to activate the E3 ligase activity of ARIH2. Interacts with ERCC6; the interaction is induced by DNA damaging agents or inhibitors of RNA polymerase II elongation. Interacts with ELOA (via the BC-box). Interacts (unneddylated form) with DCUN1D1, DCUN1D2, DCUN1D3, DCUN1D4 and DCUN1D5; these interactions promote the cullin neddylation. In terms of processing, neddylated; which enhances the ubiquitination activity of ECS complexes and prevents binding of the inhibitor CAND1. Deneddylated via its interaction with the COP9 signalosome (CSN).

The protein resides in the nucleus. Its pathway is protein modification; protein ubiquitination. In terms of biological role, core component of multiple cullin-5-RING E3 ubiquitin-protein ligase complexes (ECS complexes, also named CRL5 complexes), which mediate the ubiquitination and subsequent proteasomal degradation of target proteins. Acts a scaffold protein that contributes to catalysis through positioning of the substrate and the ubiquitin-conjugating enzyme. The functional specificity of the E3 ubiquitin-protein ligase complex depends on the variable SOCS box-containing substrate recognition component. Acts as a key regulator of neuron positioning during cortex development: component of various SOCS-containing ECS complexes, such as the ECS(SOCS7) complex, that regulate reelin signaling by mediating ubiquitination and degradation of DAB1. ECS(SOCS1) seems to direct ubiquitination of JAK2. The ECS(SOCS2) complex mediates the ubiquitination and subsequent proteasomal degradation of phosphorylated EPOR and GHR. The ECS(SPSB3) complex catalyzes ubiquitination of nuclear CGAS. ECS(KLHDC1) complex is part of the DesCEND (destruction via C-end degrons) pathway and mediates ubiquitination and degradation of truncated SELENOS selenoprotein produced by failed UGA/Sec decoding, which ends with a glycine. The ECS(ASB9) complex mediates ubiquitination and degradation of CKB. As part of some ECS complex, promotes 'Lys-11'-linked ubiquitination and degradation of BTRC. As part of a multisubunit ECS complex, polyubiquitinates monoubiquitinated POLR2A. As part of the ECS(RAB40C) complex, mediates ANKRD28 ubiquitination and degradation, thereby regulating protein phosphatase 6 (PP6) complex activity and focal adhesion assembly during cell migration. As part of the ECS(RAB40A) complex, mediates RHOU 'Lys-48'-linked ubiquitination and degradation, thus inhibiting focal adhesion disassembly during cell migration. As part of the ECS(RAB40B) complex, mediates LIMA1/EPLIN and RAP2 ubiquitination, thereby regulating actin cytoskeleton dynamics and stress fiber formation during cell migration. May form a cell surface vasopressin receptor. In Mus musculus (Mouse), this protein is Cullin-5.